The primary structure comprises 399 residues: Enoyl-[acyl-carrier-protein] reductase [NADH] (399 aa).

NAD(+) is bound by residues 48–53, 74–75, 111–112, and 139–140; these read GASTGY, FE, DA, and LA. Y225 serves as a coordination point for substrate. The active-site Proton donor is Y235. NAD(+)-binding positions include K244 and 274–276; that span reads VVT.

This sequence belongs to the TER reductase family. As to quaternary structure, monomer.

The catalysed reaction is a 2,3-saturated acyl-[ACP] + NAD(+) = a (2E)-enoyl-[ACP] + NADH + H(+). It participates in lipid metabolism; fatty acid biosynthesis. In terms of biological role, involved in the final reduction of the elongation cycle of fatty acid synthesis (FAS II). Catalyzes the reduction of a carbon-carbon double bond in an enoyl moiety that is covalently linked to an acyl carrier protein (ACP). The chain is Enoyl-[acyl-carrier-protein] reductase [NADH] from Erwinia tasmaniensis (strain DSM 17950 / CFBP 7177 / CIP 109463 / NCPPB 4357 / Et1/99).